We begin with the raw amino-acid sequence, 354 residues long: Tryptophan--tRNA ligase (354 aa).

ATP contacts are provided by residues 13-15 (QPT) and 21-22 (GN). The 'HIGH' region signature appears at 14–22 (PTGNLHLGN). Residue Asp137 coordinates L-tryptophan. ATP contacts are provided by residues 149 to 151 (GDD), Val208, and 217 to 221 (KMSKS). The short motif at 217–221 (KMSKS) is the 'KMSKS' region element.

Belongs to the class-I aminoacyl-tRNA synthetase family. Homodimer.

It localises to the cytoplasm. It carries out the reaction tRNA(Trp) + L-tryptophan + ATP = L-tryptophyl-tRNA(Trp) + AMP + diphosphate + H(+). Its function is as follows. Catalyzes the attachment of tryptophan to tRNA(Trp). This is Tryptophan--tRNA ligase from Rhizobium meliloti (strain 1021) (Ensifer meliloti).